A 467-amino-acid polypeptide reads, in one-letter code: tRNA-2-methylthio-N(6)-dimethylallyladenosine synthase (467 aa).

The MTTase N-terminal domain maps to Gly-22 to Thr-138. Residues Cys-31, Cys-67, Cys-101, Cys-173, Cys-177, and Cys-180 each contribute to the [4Fe-4S] cluster site. One can recognise a Radical SAM core domain in the interval Arg-159–Glu-396. A TRAM domain is found at Val-399–Asn-467.

It belongs to the methylthiotransferase family. MiaB subfamily. In terms of assembly, monomer. [4Fe-4S] cluster serves as cofactor.

Its subcellular location is the cytoplasm. The catalysed reaction is N(6)-dimethylallyladenosine(37) in tRNA + (sulfur carrier)-SH + AH2 + 2 S-adenosyl-L-methionine = 2-methylsulfanyl-N(6)-dimethylallyladenosine(37) in tRNA + (sulfur carrier)-H + 5'-deoxyadenosine + L-methionine + A + S-adenosyl-L-homocysteine + 2 H(+). Catalyzes the methylthiolation of N6-(dimethylallyl)adenosine (i(6)A), leading to the formation of 2-methylthio-N6-(dimethylallyl)adenosine (ms(2)i(6)A) at position 37 in tRNAs that read codons beginning with uridine. The polypeptide is tRNA-2-methylthio-N(6)-dimethylallyladenosine synthase (Prochlorococcus marinus (strain MIT 9211)).